We begin with the raw amino-acid sequence, 660 residues long: Interferon-induced GTP-binding protein Mx1 (660 aa).

Methionine 1 is modified (N-acetylmethionine). Residues 1-10 (MVHSEAKMTR) show a composition bias toward basic and acidic residues. The segment at 1 to 29 (MVHSEAKMTRPDSASASKQQLLNGNADIQ) is disordered. Positions 12 to 29 (DSASASKQQLLNGNADIQ) are enriched in polar residues. Positions 67–340 (DLALPAIAVI…LITHISKSLP (274 aa)) constitute a Dynamin-type G domain. Positions 77-84 (GDQSSGKS) are G1 motif. 77-84 (GDQSSGKS) contacts GTP. A G2 motif region spans residues 102–104 (VTR). A G3 motif region spans residues 178-181 (DLPG). Residues 178–182 (DLPGI) and 247–250 (TKPD) contribute to the GTP site. Residues 247–250 (TKPD) form a G4 motif region. The segment at 279 to 282 (KCRG) is G5 motif. Residues 341-366 (LLENQIKESYQNLSDELQKYGTDIPE) form a bundle signaling element (BSE) region. The segment at 366–533 (EDETEKTFFL…HFQMEKIVYC (168 aa)) is middle domain. The segment at 367–630 (DETEKTFFLI…RDTYDWLLKE (264 aa)) is stalk. Residues 554–557 (KKKK) are critical for lipid-binding. Residues 572-660 (MAEILEHLNA…ARRRLAKFPG (89 aa)) enclose the GED domain.

It belongs to the TRAFAC class dynamin-like GTPase superfamily. Dynamin/Fzo/YdjA family. As to quaternary structure, homooligomer. Oligomerizes into multimeric filamentous or ring-like structures by virtue of its stalk domain. Oligomerization is critical for GTPase activity, protein stability, and recognition of viral target structures. Interacts with TRPC1, TRPC3, TRPC4, TRPC5, TRPC6 and TRPC7. Interacts with HSPA5. Interacts with TUBB/TUBB5. Interacts with DDX39A and DDX39B. Post-translationally, ISGylated.

The protein localises to the cytoplasm. The protein resides in the endoplasmic reticulum membrane. It localises to the perinuclear region. Interferon-induced dynamin-like GTPase with antiviral activity. The polypeptide is Interferon-induced GTP-binding protein Mx1 (MX1) (Equus caballus (Horse)).